A 239-amino-acid chain; its full sequence is Serine protease SplF (239 aa).

The first 36 residues, 1 to 36 (MNKNIIIKSIAALTILTSITGVGTTVVDGIQQTAKA), serve as a signal peptide directing secretion. Active-site charge relay system residues include histidine 75, aspartate 114, and serine 192.

The protein belongs to the peptidase S1B family.

It localises to the secreted. The sequence is that of Serine protease SplF (splF) from Staphylococcus aureus (strain MSSA476).